A 76-amino-acid polypeptide reads, in one-letter code: Kappa-scoloptoxin(15)-Ssd3a (76 aa).

An N-terminal signal peptide occupies residues 1-23; sequence MEGKIIFICFLVVLLTLPELISS.

Contains 2 disulfide bonds. Expressed by the venom gland.

Its subcellular location is the secreted. Acts as a voltage-gated potassium channel inhibitor. The sequence is that of Kappa-scoloptoxin(15)-Ssd3a from Scolopendra dehaani (Thai centipede).